Here is a 183-residue protein sequence, read N- to C-terminus: ATP-dependent protease subunit HslV (183 aa).

The active site involves threonine 7. Na(+)-binding residues include glycine 162, cysteine 165, and threonine 168.

Belongs to the peptidase T1B family. HslV subfamily. In terms of assembly, a double ring-shaped homohexamer of HslV is capped on each side by a ring-shaped HslU homohexamer. The assembly of the HslU/HslV complex is dependent on binding of ATP.

Its subcellular location is the cytoplasm. The catalysed reaction is ATP-dependent cleavage of peptide bonds with broad specificity.. Its activity is regulated as follows. Allosterically activated by HslU binding. Functionally, protease subunit of a proteasome-like degradation complex believed to be a general protein degrading machinery. This Chromobacterium violaceum (strain ATCC 12472 / DSM 30191 / JCM 1249 / CCUG 213 / NBRC 12614 / NCIMB 9131 / NCTC 9757 / MK) protein is ATP-dependent protease subunit HslV.